The sequence spans 362 residues: Peptide chain release factor 1 (362 aa).

At Gln237 the chain carries N5-methylglutamine.

Belongs to the prokaryotic/mitochondrial release factor family. Methylated by PrmC. Methylation increases the termination efficiency of RF1.

The protein localises to the cytoplasm. Its function is as follows. Peptide chain release factor 1 directs the termination of translation in response to the peptide chain termination codons UAG and UAA. This is Peptide chain release factor 1 from Aliivibrio salmonicida (strain LFI1238) (Vibrio salmonicida (strain LFI1238)).